We begin with the raw amino-acid sequence, 1331 residues long: Mitogen-activated protein kinase kinase kinase 15 (1331 aa).

Positions 1-13 (MEGGGGSGGGGGP) are enriched in gly residues. Residues 1 to 61 (MEGGGGSGGG…GEAEGGRGPR (61 aa)) form a disordered region. In terms of domain architecture, Protein kinase spans 656-912 (NGERVVLGKG…AADLLQEGFL (257 aa)). Residues 662 to 670 (LGKGSYGIV) and Lys685 each bind ATP. Catalysis depends on Asp777, which acts as the Proton acceptor. Disordered stretches follow at residues 934-964 (GTGT…SDAQ) and 983-1005 (LSVP…EERD). A compositionally biased stretch (low complexity) spans 940-962 (LPSSGELVGSSSSEHGSISPDSD). Positions 992–1005 (LDDRSTALPPEERD) are enriched in basic and acidic residues. Residues 1216–1236 (LVQKEREYQNLLRLILDQKTQ) adopt a coiled-coil conformation.

This sequence belongs to the protein kinase superfamily. STE Ser/Thr protein kinase family. MAP kinase kinase kinase subfamily. Mg(2+) serves as cofactor.

It catalyses the reaction L-seryl-[protein] + ATP = O-phospho-L-seryl-[protein] + ADP + H(+). The enzyme catalyses L-threonyl-[protein] + ATP = O-phospho-L-threonyl-[protein] + ADP + H(+). With respect to regulation, contains an N-terminal autoinhibitory domain. Activated by phosphorylation at Thr-816, inhibited by phosphorylation at Ser-928. Serine/threonine kinase which acts as a component of the MAP kinase signal transduction pathway. Once activated, acts as an upstream activator of the p38 MAPK signal transduction cascade through the phosphorylation and activation of several MAP kinase kinases. May function in a signal transduction pathway that is activated by various cell stresses and leads to apoptosis. Involved in phosphorylation of WNK4 in response to osmotic stress or hypotonic low-chloride stimulation via the p38 MAPK signal transduction cascade. This is Mitogen-activated protein kinase kinase kinase 15 from Mus musculus (Mouse).